A 535-amino-acid chain; its full sequence is 5,6-dihydroxyindole-2-carboxylic acid oxidase (535 aa).

The first 23 residues, 1 to 23 (MQLPMLLLVSLPLLLNMFKPAEA), serve as a signal peptide directing secretion. At 24-478 (QFPRQCATIE…GPLRVTEMIT (455 aa)) the chain is on the lumenal, melanosome side. Cystine bridges form between Cys29–Cys40, Cys41–Cys64, Cys55–Cys98, Cys100–Cys109, and Cys112–Cys121. Asn95 and Asn103 each carry an N-linked (GlcNAc...) asparagine glycan. N-linked (GlcNAc...) asparagine glycosylation occurs at Asn180. Residues His191, His214, and His223 each contribute to the Zn(2+) site. Intrachain disulfides connect Cys257-Cys260 and Cys289-Cys302. 2 N-linked (GlcNAc...) asparagine glycosylation sites follow: Asn303 and Asn349. His376 and His380 together coordinate Zn(2+). Residue Asn384 is glycosylated (N-linked (GlcNAc...) asparagine). His403 is a binding site for Zn(2+). Residues 479–499 (IAIVTALVLVAIIFAAAACIV) traverse the membrane as a helical segment. The Cytoplasmic portion of the chain corresponds to 500–535 (RAKKNRDELHQPLLTDQYQHYSDDYDGIATPSQSVV).

Belongs to the tyrosinase family. As to quaternary structure, tyrosinase, TYRP1 and TYRP2 may form a multienzyme complex. Cu(2+) serves as cofactor. Requires Zn(2+) as cofactor.

The protein resides in the melanosome membrane. It carries out the reaction 2 5,6-dihydroxyindole-2-carboxylate + O2 = 2 indole-5,6-quinone-2-carboxylate + 2 H2O. It functions in the pathway pigment biosynthesis; melanin biosynthesis. In terms of biological role, plays a role in melanin biosynthesis. Catalyzes the oxidation of 5,6-dihydroxyindole-2-carboxylic acid (DHICA) into indole-5,6-quinone-2-carboxylic acid. May regulate or influence the type of melanin synthesized. Also to a lower extent, capable of hydroxylating tyrosine and producing melanin. This is 5,6-dihydroxyindole-2-carboxylic acid oxidase (TYRP1) from Gallus gallus (Chicken).